Here is a 61-residue protein sequence, read N- to C-terminus: Short neurotoxin 4 (61 aa).

4 disulfides stabilise this stretch: Cys-3/Cys-23, Cys-17/Cys-40, Cys-42/Cys-53, and Cys-54/Cys-59.

This sequence belongs to the three-finger toxin family. Short-chain subfamily. Type I alpha-neurotoxin sub-subfamily. In terms of tissue distribution, expressed by the venom gland.

The protein resides in the secreted. Functionally, binds to muscle nicotinic acetylcholine receptor (nAChR) and inhibit acetylcholine from binding to the receptor, thereby impairing neuromuscular transmission. The chain is Short neurotoxin 4 from Naja annulifera (Banded Egyptian cobra).